Reading from the N-terminus, the 313-residue chain is Porphobilinogen deaminase (313 aa).

S-(dipyrrolylmethanemethyl)cysteine is present on Cys-242.

This sequence belongs to the HMBS family. As to quaternary structure, monomer. It depends on dipyrromethane as a cofactor.

It carries out the reaction 4 porphobilinogen + H2O = hydroxymethylbilane + 4 NH4(+). The protein operates within porphyrin-containing compound metabolism; protoporphyrin-IX biosynthesis; coproporphyrinogen-III from 5-aminolevulinate: step 2/4. Its function is as follows. Tetrapolymerization of the monopyrrole PBG into the hydroxymethylbilane pre-uroporphyrinogen in several discrete steps. In Salmonella dublin (strain CT_02021853), this protein is Porphobilinogen deaminase.